Reading from the N-terminus, the 331-residue chain is Glycerophosphodiester phosphodiesterase 1 (331 aa).

At 1–2 (MW) the chain is on the cytoplasmic side. The chain crosses the membrane as a helical span at residues 3–23 (LWEEQGGLMGPFSFLLLVLLL). Topologically, residues 24-254 (LTRSPFNACL…WKQSMFVALD (231 aa)) are lumenal. Positions 65–331 (VSAIAHRGGS…SMLEDCTPEF (267 aa)) constitute a GP-PDE domain. Residues glutamate 97 and aspartate 99 each coordinate Mg(2+). N-linked (GlcNAc...) asparagine glycosylation occurs at asparagine 168. Residue aspartate 174 participates in Mg(2+) binding. The N-linked (GlcNAc...) asparagine glycan is linked to asparagine 198. Residues 255–275 (ILLDWSMHNILWYLCGVSAFL) form a helical membrane-spanning segment. Residues 276–331 (AQKDFISPDYVKKWSAKGIQVVAWTVNTFDEKSYYESHLGSSYITDSMLEDCTPEF) lie on the Cytoplasmic side of the membrane.

This sequence belongs to the glycerophosphoryl diester phosphodiesterase family. Interacts with PRAF2. Interacts with RGS16. Mg(2+) serves as cofactor. In terms of processing, N-glycosylated.

It localises to the cell membrane. The protein resides in the cytoplasmic vesicle membrane. It carries out the reaction sn-glycero-3-phospho-1D-myo-inositol + H2O = myo-inositol + sn-glycerol 3-phosphate + H(+). The catalysed reaction is 1-O-(1Z-octadecenyl)-sn-glycero-3-phospho-(N-5Z,8Z,11Z,14Z-eicosatetraenoyl)-ethanolamine + H2O = 1-O-(1Z-octadecenyl)-sn-glycero-3-phosphate + N-(5Z,8Z,11Z,14Z-eicosatetraenoyl)-ethanolamine + H(+). The enzyme catalyses 1-O-(1Z-octadecenyl)-sn-glycero-3-phospho-(N-9Z-octadecenoyl)-ethanolamine + H2O = 1-O-(1Z-octadecenyl)-sn-glycero-3-phosphate + N-(9Z-octadecenoyl) ethanolamine + H(+). It catalyses the reaction 1-O-(1Z-octadecenyl)-sn-glycero-3-phospho-N-hexadecanoyl-ethanolamine + H2O = 1-O-(1Z-octadecenyl)-sn-glycero-3-phosphate + N-hexadecanoylethanolamine + H(+). It carries out the reaction N-(4Z,7Z,10Z,13Z,16Z,19Z)-docosahexaenoyl-sn-glycero-3-phosphoethanolamine + H2O = N-(4Z,7Z,10Z,13Z,16Z,19Z)-docosahexaenoyl ethanolamine + sn-glycerol 3-phosphate + H(+). The catalysed reaction is N-eicosanoyl-sn-glycero-3-phosphoethanolamine + H2O = N-eicosanoyl ethanolamine + sn-glycerol 3-phosphate + H(+). The enzyme catalyses N-hexadecanoyl-sn-glycero-3-phosphoethanolamine + H2O = N-hexadecanoylethanolamine + sn-glycerol 3-phosphate + H(+). It catalyses the reaction N-(9Z-octadecenoyl)-sn-glycero-3-phosphoethanolamine + H2O = N-(9Z-octadecenoyl) ethanolamine + sn-glycerol 3-phosphate + H(+). It carries out the reaction N-(5Z,8Z,11Z,14Z-eicosatetraenoyl)-sn-glycero-3-phosphoethanolamine + H2O = N-(5Z,8Z,11Z,14Z-eicosatetraenoyl)-ethanolamine + sn-glycerol 3-phosphate + H(+). Inhibited by EDTA, calcium chloride, and zinc chloride. Enhanced by magnesium chloride. Glycerophosphodiester phosphodiesterase activity can be modulated by G-protein signaling pathways. Its function is as follows. Hydrolyzes the phosphodiester bond of glycerophosphodiesters such as glycerophosphoinositol (GroPIns) and glycerophosphoethanolamine (GroPEth), to yield a glycerol phosphate and an alcohol. Hydrolyzes glycerophospho-N-acylethanolamines to N-acylethanolamines in the brain and participates in bioactive N-acylethanolamine biosynthesis such as anandamide (an endocannabinoid), N-palmitoylethanolamine (an anti-inflammatory), and N-oleoylethanolamine (an anorexic). In addition, has a lysophospholipase D activity by hydrolyzing N-acyl-lysoplasmenylethanolamine (N-acyl-lysoPlsEt) to N-acylethanolamine. However lysophospholipase D activity is lower than glycerophosphodiester phosphodiesterase activity. Has little or no activity towards glycerophosphocholine. The protein is Glycerophosphodiester phosphodiesterase 1 of Bos taurus (Bovine).